The following is a 79-amino-acid chain: Small ribosomal subunit protein uS17 (79 aa).

The protein belongs to the universal ribosomal protein uS17 family. Part of the 30S ribosomal subunit.

Its function is as follows. One of the primary rRNA binding proteins, it binds specifically to the 5'-end of 16S ribosomal RNA. The sequence is that of Small ribosomal subunit protein uS17 from Bartonella henselae (strain ATCC 49882 / DSM 28221 / CCUG 30454 / Houston 1) (Rochalimaea henselae).